A 120-amino-acid polypeptide reads, in one-letter code: Large ribosomal subunit protein bL12 (120 aa).

The protein belongs to the bacterial ribosomal protein bL12 family. Homodimer. Part of the ribosomal stalk of the 50S ribosomal subunit. Forms a multimeric L10(L12)X complex, where L10 forms an elongated spine to which 2 to 4 L12 dimers bind in a sequential fashion. Binds GTP-bound translation factors.

Forms part of the ribosomal stalk which helps the ribosome interact with GTP-bound translation factors. Is thus essential for accurate translation. This Alkaliphilus metalliredigens (strain QYMF) protein is Large ribosomal subunit protein bL12.